Here is a 368-residue protein sequence, read N- to C-terminus: Agmatine deiminase (368 aa).

The Amidino-cysteine intermediate role is filled by cysteine 357.

Belongs to the agmatine deiminase family. In terms of assembly, homodimer.

The catalysed reaction is agmatine + H2O = N-carbamoylputrescine + NH4(+). Its pathway is amine and polyamine biosynthesis; putrescine biosynthesis via agmatine pathway; N-carbamoylputrescine from agmatine: step 1/1. Functionally, mediates the hydrolysis of agmatine into N-carbamoylputrescine in the arginine decarboxylase (ADC) pathway of putrescine biosynthesis, a basic polyamine. The sequence is that of Agmatine deiminase from Pseudomonas fluorescens (strain ATCC BAA-477 / NRRL B-23932 / Pf-5).